Consider the following 234-residue polypeptide: Redox-sensing transcriptional repressor Rex (234 aa).

The H-T-H motif DNA-binding region spans 17-56 (TYIRVLEELEAQNVLRASSGELARRAGVTPFQVRKDLTYF). 91 to 96 (GMGRLG) serves as a coordination point for NAD(+).

The protein belongs to the transcriptional regulatory Rex family. In terms of assembly, homodimer.

It localises to the cytoplasm. Modulates transcription in response to changes in cellular NADH/NAD(+) redox state. The protein is Redox-sensing transcriptional repressor Rex of Deinococcus radiodurans (strain ATCC 13939 / DSM 20539 / JCM 16871 / CCUG 27074 / LMG 4051 / NBRC 15346 / NCIMB 9279 / VKM B-1422 / R1).